A 232-amino-acid chain; its full sequence is 5'-methylthioadenosine/S-adenosylhomocysteine nucleosidase (232 aa).

Glu-12 functions as the Proton acceptor in the catalytic mechanism. Residues Gly-78, Ile-152, and 173–174 each bind substrate; that span reads ME. Catalysis depends on Asp-197, which acts as the Proton donor.

The protein belongs to the PNP/UDP phosphorylase family. MtnN subfamily. Homodimer.

It carries out the reaction S-adenosyl-L-homocysteine + H2O = S-(5-deoxy-D-ribos-5-yl)-L-homocysteine + adenine. It catalyses the reaction S-methyl-5'-thioadenosine + H2O = 5-(methylsulfanyl)-D-ribose + adenine. The enzyme catalyses 5'-deoxyadenosine + H2O = 5-deoxy-D-ribose + adenine. The protein operates within amino-acid biosynthesis; L-methionine biosynthesis via salvage pathway; S-methyl-5-thio-alpha-D-ribose 1-phosphate from S-methyl-5'-thioadenosine (hydrolase route): step 1/2. Its function is as follows. Catalyzes the irreversible cleavage of the glycosidic bond in both 5'-methylthioadenosine (MTA) and S-adenosylhomocysteine (SAH/AdoHcy) to adenine and the corresponding thioribose, 5'-methylthioribose and S-ribosylhomocysteine, respectively. Also cleaves 5'-deoxyadenosine, a toxic by-product of radical S-adenosylmethionine (SAM) enzymes, into 5-deoxyribose and adenine. Thus, is required for in vivo function of the radical SAM enzymes biotin synthase and lipoic acid synthase, that are inhibited by 5'-deoxyadenosine accumulation. This Cronobacter sakazakii (strain ATCC BAA-894) (Enterobacter sakazakii) protein is 5'-methylthioadenosine/S-adenosylhomocysteine nucleosidase.